The chain runs to 414 residues: MFRMLAKASVTLGSRAASWVRNMGSHQLLVPPPEALSKPLSIPKRLLLGPGPSNLAPRVLAAGSLRMIGHMQKEMFQIMDEIKQGIQYVFQTRNPLTLVVSGSGHCAMETALFNLLEPGDSFLVGTNGIWGIRAAEIAERIGARVHQMIKKPGEHYTLQEVEEGLAQHKPVLLFLTHGESSTGVLQPLDGFGELCHRYQCLLLVDSVASLGGVPIYMDQQGIDILYSGSQKVLNAPPGISLISFNDKAKSKVYSRKTKPVSFYTDITYLSKLWGCEGKTRVIHHTLPVISLYCLRESLALISEQGLENSWRRHREATAHLHKCLRELGLKFFVKDPEIRLPTITTVTVPAGYNWRDIVSYVLDHFNIEISGGLGPSEDKVLRIGLLGYNATTENADRVAEALREALQHCPKNKL.

A mitochondrion-targeting transit peptide spans 1–23 (MFRMLAKASVTLGSRAASWVRNM). At lysine 231 the chain carries N6-(pyridoxal phosphate)lysine. At lysine 247 the chain carries N6-acetyllysine; alternate. Lysine 247 carries the post-translational modification N6-succinyllysine; alternate. 2 positions are modified to N6-acetyllysine: lysine 256 and lysine 334. Arginine 382 contributes to the substrate binding site. Positions 412–414 (NKL) match the Microbody targeting signal motif.

It belongs to the class-V pyridoxal-phosphate-dependent aminotransferase family. As to quaternary structure, homodimer. Pyridoxal 5'-phosphate serves as cofactor.

The protein localises to the peroxisome. The protein resides in the mitochondrion matrix. It catalyses the reaction L-serine + pyruvate = 3-hydroxypyruvate + L-alanine. It carries out the reaction glyoxylate + L-alanine = glycine + pyruvate. In terms of biological role, catalyzes the transamination of glyoxylate to glycine and contributes to the glyoxylate detoxification. Catalyzes the transamination between L-serine and pyruvate and weakly contributes to gluconeogenesis from the L-serine metabolism. The protein is Alanine--glyoxylate aminotransferase of Rattus norvegicus (Rat).